Here is a 90-residue protein sequence, read N- to C-terminus: Putative membrane protein insertion efficiency factor (90 aa).

The protein belongs to the UPF0161 family.

The protein localises to the cell membrane. Its function is as follows. Could be involved in insertion of integral membrane proteins into the membrane. The sequence is that of Putative membrane protein insertion efficiency factor from Oceanobacillus iheyensis (strain DSM 14371 / CIP 107618 / JCM 11309 / KCTC 3954 / HTE831).